The following is a 4037-amino-acid chain: MSSTEPIAVIGSACRFPGSSDRPSKLWELLREPRDLLQKVSERRRWHPDAFYHSDPEHHGTTNVRSSYFLDEDPADFDNAFFNIQPSEAEAIDPQQRMLMETVYDSLCSAGQTIEGLRGSSTAVIVGTMCDDWSGVLYKDWETIPQYSATGMGRSIMSNRVSYFFDWHGPSMTLDTACSSSLVAVHLAIQALRTGESRVAVAAGANLLLGPGMYIAEANLHMLSPKGRSAMWDKDVDGYARGEGIASVILKPLSAAIEDGDHIECLIRATGVNQDGRTQGLTMPSATAQAALIRETYARAGLDIDKPEDRPQFFHAHGTGTPAGDPQEAEAISKAFYSQDASDSLYVGSIKTVIGHTEGTAGLASLLGTSLALQHGMVPPNMHFNELNPRIAPFYGNLQVPTTAKPWPKLLPGQPRRASVNSFVFVIYLDSWLTWPPNAGFGGTNAHAILEAYEPPSVSPSAGPLFSPLTISAATEKSLRALMSSYSEYLKANPKTSLRDFAYTLQERRSTLAFRAAIAASTSDEAAIKIDGLLDAEDARELSTKHFGIPSPRLLGVFTGQGAQWPRMGARLVEASPFVATRLDELDASLASLPESIRPEWTLKEQMLEDAATSRVAEAAVSQPLCTAVQILLVDLLSVAGVRFHAVVGHSSGEIGAAYAAGLLSASSAIRIAYLRGLYAKLANSPNGNIRGAMMAAGTSFEDASEFCQLEGFEGRIQVAAVNSASSITLSGDEDAIAEAVEIFKDEGKFARQLKVDTAYHSAHMLPCSKPYLKSLEAMTDVLGADASGEGKPAWYSSVHEGEIMKPAALNPQYWVSNMTNTVLFAPAVAAAVAQSGPFDMALELGPHPALKGPCLDTLAEALGDRIPYSGLLSRGQDDISEMSAALGSVWSNLGAGSVSFETFEKSISGDLKGRNLIADLPKYEFDHSRSFWTISRAVGAQLVAHDPPHPVLGRRCVDRETSREIQWRNILSPKEVPWLKGHRIQGGIVYPAAGFVAMAVEAMRALAGKSSINLIKIDNLFIGRAIAFNEETSTVETLFSVKVVSSSDESIQASFSCYSGAPHEPGTSMGLNAEGIVTVTLADHEADVILFVEPKDFNMTEIETDRFYDQFQRLEYEYSPPFRGMLAIKRKKGHARGTIEDQSGSDWEDQFLIHPGMLDTAFQSSSAAFSCPGDGMMWGLYIPAGIQSIVINPYFTPAGMGKQQTLPWEAIARSMHKARSTMDINIFSQDSTHTFIQVEGLELMPFTAARPEDDAVIFSRFDYKIDGPSGDIAVADDGFTAEALENAIKGERVSFYYLRRLVESITPEEKANAPRYYRHLLDWASHVVDRVKSGKNPFVQSSWQLDTEEQIKAIWDKYGDRVDVRLIESVGKHLPDVIRKGTSILEHMEGLFEFYDQGLGLDMANRHLARMVAQVGHRYPQMRVFEIGEPRKPAPMLLCCHSDSRVLGAGTGGSTRTILSYLGDMFSSYTYTDISSGFFEAAQDRFKDFESRMVYKTFDMERDPESQGFVEGSYDLVLASNCLHATDKLEEMMTNARRLLRPGGYLIALELTSNETMRVGLPMGSLPGWWVGAESGRPWGPTVTLPQWDSLLRKCGFGGIDTSTPLLHKLHVSTVFAAQAVDDRVSLLRSPLASITVLPPTDAPRLVVVGGEALATHRIAERVASLLGPRFSDIARVTSFESLDIDALPYGSTVLSLSELDEPLFKNMNPAKLDALKTLWRQAGKILWVTRGARAEEPFSSMMLGLGRAMTHEYPNISLQILDLDRLEDEEKTAQLFTAELLRLEVLKKWQHEAQGEVDFLWSIEPEVCFEGGARLIPRLYKCRPANDRYNSARRPVMTEIDPRETPILFASEGASYELQHPSPLRIPSAPPAVSKTRTVNVSHFLLQTVHMSSAGRFMLFAGADRYTGERLLGLSHTTESQPTVPTEWTFPIASEGTNPAEALSSVYGQIIAREILKMVPKGSSIVVHEPDPSLGAALLQQAEACATEVVLTTSRKGSVSSEGRFIPANLSRRLVKKALPDSTSLYVDLSHAGESSEAGKLIGKCLPGSCSTYGSGYFHGTTPELRPGSSSSQLSAIFKAACEAAFEGQCQTAIPDIVQLQDVPSLRAIGRPLTVVDCVSTATVPVNVQTVDSGMIFRADKTYFLVGMSGQVGQSLCQWMVERGARYVVLTSRHPQVHPEYVKSMEAMGATIRVLPLDITSRDSLQQCYAEMCKTMPPVAGVAQGAMVLRDSMFDGLSFENLTAVLDPKVTGTQLLDELFYDAPLDFFIVMSSLTSVVGNSGQSNYTAANMFMVALAEQRRKRGVAGSAIAISSLIGIGYVERSEDFTGDYFEKIGYRNISEQDLHQLFAEAILVGRPGCRESSEITTGLEPFYPERNAKAQFFDDIRFNHFILERHDAQNLGGKGSAVPVRVQLAEVKTRDEAAVIIKGEANSRKNDFETQKADSRTDGFLARLRRTLMISQDEAVNEKASLVEQGIDSLMAVEVRSWFLKELEVDIPVLKILGGSSITDLLNEALERVPVSVVDLKAMANTKASTPEHRKVSVPPPPSVEVKSSSPGSSSEPQSSPADSPSRPSTPLRTPMTEMEESKTLAPVVVEKPKVYPAAKEEASEMSYGQARFWFLSGYLEDKTSFNMTVMFKLTGKLQVARLESAVRTVAQRHEALRTRFFWSGEGDRRTPMQGVLSESPIQLEHVRIESEADAQKQLAKMHEYVWDLNSWEAARMVLLTVDDDVHYFMVSGHHISWDGYSFTVLFVDLDAAYCGRPLAPLGPECQYPAFAAWQRDTYAAGAMKKAIDTYYRPMIDPHAKAIPLFPFAKSPTRPLLDHFEQFEAKATLQPALVSKLKQLSRKNGATMFHLYLAALQALVFRLLPEEDDFYLGVADANRMDKSFMGSLGFFLNLLPVRFDRSQPGTKISEIIKDTRNKAYKALENSFVPWNVLLQELKIPRTNTEAPIFQLFVDYRQIARDRAQWCGCALSDEDWLNARNGYDLTLGITDNPTGESLLSLRFQKKLYSEHSTNLFLRSYVTVLESFATGVDLEVSELPRWAPSDVEATLEAGKVYRKLMTNPQGPCTQLDWPATVSHRIDEMIHEHTAQPALKDGLGNSLTYGQMRDRINMISAALIAGGAIEGSSIGVFQNPSADWICSMLAIFRIGATYVPLDLRNSIARIVSIVADVQPTVILSDRYTTTKIRQIGAVQATEIVVSDIATSVSAPDLPNKAAPDSRAVILFTSGTTGKPKGVILTHANLRAQCEGYSRMVDLPSMVSVVLQQTIYNFDVSLDQIFAALADGGCLYVVPAEKRGDPQAITEIMAEQGVTYTVATPSEYEIWFRYARDNLARCKSWGYAFGGGEHLHSGLIHEFSSLAAQHIPGLRLFNNYGPTEASLAITKGEVQHSDPGLEDHVPAGWIIPNYKVAVVDEKLQPVPFETSGEILAGGPGVASGYLGQDELTREKFIAGVRIHPLAAKSANTWYRTGDRGRLRRDGALYVDGRILGDSQVKIRGFRVELQEIEAVLLEAAKGALSHAVITARGTGEDRFLAAHVVFAPDFPQHRRQATIHHLESKLPLPPYMQPTVIVPLASIPVTSNFKLDRKAIQALPLPETDGLGENLADVEKSVAMLWKSIIPHGVRDLTPETNFFDVGGNSILLVKLKAAMSRELKVTPLLIDLMNSSTLGGMARIVRASSGARVINWEAETSVPESLRALVKQKKTLSRSKRKNENLVVVLAGATGYLGRHILARLVNAPEVSEINCLVRDEGLEAATSSLQNSPKVRLIPADLSQPDIGLSLAKFSDLSQRADIVVDCAANRSFWDGYETLRTVNLDAVKELARLCVTNGASLHFVSSGAVQAYENSAPPTDGSDGYVASKWAAETFLRRAAESLGLQVHIHRPLGSADVGAPDSTPDRKNPSTKDEIQRDLDHILLKLGKRPDFSAVTGYVDVTPVNSVVSDMVAAMIQEISSGHGGAMLRVTEHRGRLRLHIKEFGDHIGASSQLSALPTMNPLFWFADAKKAGFAQLITSQRLVMHNKEGELVTRR.

One can recognise a Ketosynthase family 3 (KS3) domain in the interval T4 to P436. Residues C178, H317, and H356 each act as for beta-ketoacyl synthase activity in the active site. Residues V557–D879 are malonyl-CoA:ACP transacylase (MAT) domain. Positions H950–H1085 are N-terminal hotdog fold. The tract at residues H950–R1251 is dehydratase (DH) domain. Residues H950 to E1253 enclose the PKS/mFAS DH domain. H983 serves as the catalytic Proton acceptor; for dehydratase activity. Residues M1100 to E1253 form a C-terminal hotdog fold region. D1160 serves as the catalytic Proton donor; for dehydratase activity. A methyltransferase (MT) domain region spans residues L1448 to K1610. Positions T2144–S2315 are ketoreductase (KR) domain. Residues D2447–V2522 form the Carrier 1 domain. The residue at position 2482 (S2482) is an O-(pantetheine 4'-phosphoryl)serine. Positions T2535–L2594 are disordered. Over residues V2553–P2584 the composition is skewed to low complexity. The tract at residues E2614 to L3046 is condensation (C) domain. The tract at residues E3094 to I3495 is adenylation (A) (KR) domain. Residues E3610–S3687 enclose the Carrier 2 domain. S3647 is modified (O-(pantetheine 4'-phosphoryl)serine). The interval L3724–S3961 is reductase (RED) domain. The interval G3894–E3915 is disordered. Over residues T3904–E3915 the composition is skewed to basic and acidic residues.

The protein in the C-terminal section; belongs to the NRP synthetase family.

Its pathway is mycotoxin biosynthesis. Functionally, hybrid PKS-NRPS synthetase; part of the gene cluster that mediates the biosynthesis of pyrrolocin, a bright yellow trans-fused decalin-containing tetramic acid with antimicrobial activity. The PKS module of prlS together with the enoylreductase prlC catalyze the formation of the polyketide unit which is then conjugated to L-serine by the condensation domain of the prlS NRPS module. Diels-Alderase gNR600 is involved in endo-selective Diels-Alder cycloaddition to form the decalin ring. Subsequent methylation is carried leads to pyrrolocin A. The methyltransferase involved in that last step has not been identified yet and is probably located outside of the prl cluster. This is Hybrid PKS-NRPS synthetase prlS from Fungal sp. (strain NRRL 50135).